The chain runs to 753 residues: Replication restart protein PriA (753 aa).

The Helicase ATP-binding domain occupies 228–395; that stretch reads SLVAEQFQTC…LSKKYTLSVL (168 aa). Position 241–248 (241–248) interacts with ATP; the sequence is GVTGSGKT. A DEAH box motif is present at residues 337 to 340; that stretch reads DEEH. Residues Cys-458, Cys-461, Cys-467, Cys-470, Cys-485, Cys-488, Cys-499, and Cys-502 each coordinate Zn(2+). One can recognise a Helicase C-terminal domain in the interval 491 to 646; the sequence is RLSKPITSCP…DFPAFYKEEI (156 aa).

This sequence belongs to the helicase family. PriA subfamily. As to quaternary structure, component of the replication restart primosome. The cofactor is Zn(2+).

The enzyme catalyses Couples ATP hydrolysis with the unwinding of duplex DNA by translocating in the 3'-5' direction.. The catalysed reaction is ATP + H2O = ADP + phosphate + H(+). Functionally, initiates the restart of stalled replication forks, which reloads the replicative helicase on sites other than the origin of replication. Recognizes and binds to abandoned replication forks and remodels them to uncover a helicase loading site. Promotes assembly of the primosome at these replication forks. The polypeptide is Replication restart protein PriA (Chlamydia trachomatis serovar D (strain ATCC VR-885 / DSM 19411 / UW-3/Cx)).